The following is a 500-amino-acid chain: Lysine--tRNA ligase (500 aa).

Residues glutamate 410 and glutamate 417 each contribute to the Mg(2+) site.

Belongs to the class-II aminoacyl-tRNA synthetase family. As to quaternary structure, homodimer. Mg(2+) is required as a cofactor.

The protein resides in the cytoplasm. The catalysed reaction is tRNA(Lys) + L-lysine + ATP = L-lysyl-tRNA(Lys) + AMP + diphosphate. The protein is Lysine--tRNA ligase of Shewanella baltica (strain OS155 / ATCC BAA-1091).